The sequence spans 281 residues: Proteasome subunit beta (281 aa).

The propeptide at 1–53 (MEANTRSTGRLPAAFLTPGSSSFMDFLSDQSPEMLPGNRSLPPLQGAVEAPHG) is removed in mature form; by autocatalysis. The Nucleophile role is filled by T54.

Belongs to the peptidase T1B family. The 20S proteasome core is composed of 14 alpha and 14 beta subunits that assemble into four stacked heptameric rings, resulting in a barrel-shaped structure. The two inner rings, each composed of seven catalytic beta subunits, are sandwiched by two outer rings, each composed of seven alpha subunits. The catalytic chamber with the active sites is on the inside of the barrel. Has a gated structure, the ends of the cylinder being occluded by the N-termini of the alpha-subunits. Is capped by the proteasome-associated ATPase, ARC.

The protein resides in the cytoplasm. The catalysed reaction is Cleavage of peptide bonds with very broad specificity.. Its pathway is protein degradation; proteasomal Pup-dependent pathway. The formation of the proteasomal ATPase ARC-20S proteasome complex, likely via the docking of the C-termini of ARC into the intersubunit pockets in the alpha-rings, may trigger opening of the gate for substrate entry. Interconversion between the open-gate and close-gate conformations leads to a dynamic regulation of the 20S proteasome proteolysis activity. Its function is as follows. Component of the proteasome core, a large protease complex with broad specificity involved in protein degradation. This chain is Proteasome subunit beta, found in Streptomyces griseus subsp. griseus (strain JCM 4626 / CBS 651.72 / NBRC 13350 / KCC S-0626 / ISP 5235).